A 260-amino-acid chain; its full sequence is Kallikrein-8 (260 aa).

Residues 1–28 (MGRPPPCAIQPWILLLLFMGAWAGLTRA) form the signal peptide. Residues 29–32 (QGSK) constitute a propeptide that is removed on maturation. A Peptidase S1 domain is found at 33–257 (ILEGRECIPH…YTTWIKKTMD (225 aa)). Disulfide bonds link Cys-39–Cys-173, Cys-58–Cys-74, Cys-145–Cys-246, Cys-152–Cys-218, Cys-184–Cys-198, and Cys-208–Cys-233. Catalysis depends on His-73, which acts as the Charge relay system. N-linked (GlcNAc...) asparagine glycosylation occurs at Asn-110. Asp-120 acts as the Charge relay system in catalysis. Catalysis depends on Ser-212, which acts as the Charge relay system.

Belongs to the peptidase S1 family. Kallikrein subfamily. In terms of assembly, interacts with SPINK9. In terms of tissue distribution, expressed in the limbic system of mouse brain and is localized at highest concentration in pyramidal neurons of the hippocampal CA1-3 subfields. Also detected in spinal cord gray matter and in keratinized stratified epithelia of epidermis, hair, tongue, palate, nasal cavity, pharynges, esophagus and forestomach. In skin and mucus membranes, expressed in stratum spinosum and stratum granulosum. Expressed during estrus in vaginal epithelial cells but not stromal cells. Within the vaginal epithelium, expressed in prickle cells, granular cells and parakeratotic cells but not in basal cells. Not expressed in uterus. Expressed in the keratinocytes.

It localises to the secreted. Its subcellular location is the cytoplasm. It carries out the reaction Cleavage of amide substrates following the basic amino acids Arg or Lys at the P1 position, with a preference for Arg over Lys.. With respect to regulation, strongly inhibited by diisopropyl fluorophosphate, leupeptin and (4-amidinophenyl)methanesulfonyl 1-fluoride. Functionally, serine protease which is capable of degrading a number of proteins such as casein, fibrinogen, kininogen, fibronectin and collagen type IV. Also cleaves L1CAM in response to increased neural activity. Induces neurite outgrowth and fasciculation of cultured hippocampal neurons. Plays a role in the formation and maturation of orphan and small synaptic boutons in the Schaffer-collateral pathway, regulates Schaffer-collateral long-term potentiation in the hippocampus and is required for memory acquisition and synaptic plasticity. Involved in skin desquamation and keratinocyte proliferation. Plays a role in the secondary phase of pathogenesis following spinal cord injury. The chain is Kallikrein-8 (Klk8) from Mus musculus (Mouse).